The primary structure comprises 37 residues: Large ribosomal subunit protein bL36 (37 aa).

This sequence belongs to the bacterial ribosomal protein bL36 family.

The chain is Large ribosomal subunit protein bL36 from Natranaerobius thermophilus (strain ATCC BAA-1301 / DSM 18059 / JW/NM-WN-LF).